The chain runs to 227 residues: uncharacterized protein (227 aa).

17–24 (GKTGCGKT) is a binding site for ATP.

This is an uncharacterized protein from Methanocaldococcus jannaschii (strain ATCC 43067 / DSM 2661 / JAL-1 / JCM 10045 / NBRC 100440) (Methanococcus jannaschii).